The chain runs to 565 residues: Protein unc-87 (565 aa).

Residues 1–27 (MLSFNNTTSASSFQSASSRYLMSSSSS) show a composition bias toward low complexity. Disordered stretches follow at residues 1–83 (MLSF…TTNS) and 237–262 (IPSQAGWNKGDSQKLMTNFGTPRNTN). Basic and acidic residues predominate over residues 54-69 (EALERLRPNTASRERN). Calponin-like repeat units lie at residues 237 to 262 (IPSQAGWNKGDSQKLMTNFGTPRNTN), 285 to 310 (VRLQSGTNKYCSQRGMTGFGSGRDVC), and 338 to 363 (VRLQAGTNKYDSQKGMTGFGTGRRET). Positions 250 to 262 (KLMTNFGTPRNTN) are enriched in polar residues. Residues 369 to 381 (SKHPEYDHEKPDQ) are compositionally biased toward basic and acidic residues. The tract at residues 369–400 (SKHPEYDHEKPDQSEIPLQSGTNKFASQKGMT) is disordered. Polar residues predominate over residues 384 to 398 (IPLQSGTNKFASQKG). Calponin-like repeat units lie at residues 384–409 (IPLQSGTNKFASQKGMTGFGTARRET), 431–456 (IPSQMGSNQYASQKGMTGFGQPRWEV), 472–497 (VRLQSGTNRFASQAGMIGFGTCRNTT), and 517–542 (IPSQAGWNKGDSQKKMTSFGAPRDVK).

Belongs to the calponin family. As to quaternary structure, monomer. Interacts with F-actin. Interacts with myosin. As to expression, expressed in the body wall muscles. Isoform a: Expression in the pharynx, anal depressor muscle, uterine muscle, vulva and unidentified neurons in the head and the ventral region. Isoform b: Expression in the body wall muscles, spermatheca, vulva and in the myoepithelial sheath.

It localises to the cytoplasm. The protein localises to the myofibril. The protein resides in the sarcomere. Its subcellular location is the i band. Thin filament-associated protein that is implicated in actin bundling and actin filament dynamics. Exhibits F-actin cross-linking activity. Required for the maintenance of sarcomeric actin organization in striated muscles. Competes with unc-60 isoform b for actin binding and protects actin filaments from depolymerization by unc-60, thereby contributing to actin filament stability. Cooperates with myosin to form actomyosin bundles and inhibits actomyosin ATPase activity and actomyosin motility. Might protect the myofilaments from mechanical stress. In terms of biological role, acts as a negative regulator of myosin-dependent contractility of smooth muscle-like cells in the somatic gonad. The chain is Protein unc-87 (unc-87) from Caenorhabditis elegans.